The primary structure comprises 514 residues: Ribonuclease Y (514 aa).

A helical transmembrane segment spans residues 3–23; sequence VLWMVLGLAIGIAVGAAAGYI. Residues 203–266 enclose the KH domain; it reads TVKAVELPSD…EVARIAMERL (64 aa). The region spanning 330-423 is the HD domain; the sequence is VLAHSVEVAN…VATADAVSAA (94 aa).

The protein belongs to the RNase Y family.

It localises to the cell membrane. Functionally, endoribonuclease that initiates mRNA decay. This is Ribonuclease Y from Rubrobacter xylanophilus (strain DSM 9941 / JCM 11954 / NBRC 16129 / PRD-1).